The chain runs to 324 residues: Beta-ketoacyl-[acyl-carrier-protein] synthase III (324 aa).

Residues C112 and H251 contribute to the active site. Positions 252–256 are ACP-binding; the sequence is QANLR. Residue N281 is part of the active site.

It belongs to the thiolase-like superfamily. FabH family. As to quaternary structure, homodimer.

Its subcellular location is the cytoplasm. It carries out the reaction malonyl-[ACP] + acetyl-CoA + H(+) = 3-oxobutanoyl-[ACP] + CO2 + CoA. It participates in lipid metabolism; fatty acid biosynthesis. In terms of biological role, catalyzes the condensation reaction of fatty acid synthesis by the addition to an acyl acceptor of two carbons from malonyl-ACP. Catalyzes the first condensation reaction which initiates fatty acid synthesis and may therefore play a role in governing the total rate of fatty acid production. Possesses both acetoacetyl-ACP synthase and acetyl transacylase activities. Its substrate specificity determines the biosynthesis of branched-chain and/or straight-chain of fatty acids. This chain is Beta-ketoacyl-[acyl-carrier-protein] synthase III, found in Clostridium perfringens (strain SM101 / Type A).